We begin with the raw amino-acid sequence, 191 residues long: Molybdenum cofactor guanylyltransferase (191 aa).

Residues 11-13, lysine 23, aspartate 66, and aspartate 97 each bind GTP; that span reads LCG. A Mg(2+)-binding site is contributed by aspartate 97.

This sequence belongs to the MobA family. As to quaternary structure, monomer. Mg(2+) serves as cofactor.

The protein resides in the cytoplasm. The catalysed reaction is Mo-molybdopterin + GTP + H(+) = Mo-molybdopterin guanine dinucleotide + diphosphate. Functionally, transfers a GMP moiety from GTP to Mo-molybdopterin (Mo-MPT) cofactor (Moco or molybdenum cofactor) to form Mo-molybdopterin guanine dinucleotide (Mo-MGD) cofactor. The sequence is that of Molybdenum cofactor guanylyltransferase from Campylobacter jejuni subsp. jejuni serotype O:2 (strain ATCC 700819 / NCTC 11168).